A 102-amino-acid chain; its full sequence is ATP-dependent Clp protease adapter protein ClpS (102 aa).

Belongs to the ClpS family. As to quaternary structure, binds to the N-terminal domain of the chaperone ClpA.

In terms of biological role, involved in the modulation of the specificity of the ClpAP-mediated ATP-dependent protein degradation. This is ATP-dependent Clp protease adapter protein ClpS from Shewanella halifaxensis (strain HAW-EB4).